Consider the following 129-residue polypeptide: M-zodatoxin-Lt8b (129 aa).

An N-terminal signal peptide occupies residues 1-20 (MKYFVVALALVAAFACIAES). The propeptide occupies 21-60 (KPAESEHELAEVEEENELADLEDAVWLEHLADLSDLEEAR). The short motif at 57–60 (EEAR) is the Processing quadruplet motif element.

Post-translationally, cleavage of the propeptide depends on the processing quadruplet motif (XXXR, with at least one of X being E). In terms of tissue distribution, expressed by the venom gland.

It is found in the secreted. Its function is as follows. Insecticidal, cytolytic and antimicrobial peptide. Forms voltage-dependent, ion-permeable channels in membranes. At high concentration causes cell membrane lysis. In Lachesana tarabaevi (Spider), this protein is M-zodatoxin-Lt8b (cit 1-2).